A 192-amino-acid chain; its full sequence is Intraflagellar transport protein 22 (192 aa).

GTP-binding positions include 12–19 and 62–69; these read GPQRTGKT and WDVSGSVQ.

This sequence belongs to the small GTPase superfamily. Rab family. Component of the IFT complex B, composed of IFT88, IFT70, IFT52, IFT46, IFT27, IFT25 and IFT22.

Its subcellular location is the cell projection. It is found in the cilium. The protein resides in the flagellum. Component of the intraflagellar transport (IFT) complex B. Functions in regulating the cellular pool size of both complex A and complex B and thus plays a critical role in determining the cellular availability of IFT particles. The protein is Intraflagellar transport protein 22 (FAP9) of Chlamydomonas reinhardtii (Chlamydomonas smithii).